Here is a 327-residue protein sequence, read N- to C-terminus: Mitochondrial coenzyme A transporter SLC25A42 (327 aa).

3 Solcar repeats span residues 34–120 (KSVL…YKKL), 132–217 (LTPI…LKKL), and 227–315 (PYTF…TQIL). Helical transmembrane passes span 36 to 56 (VLNSLTSGALAGAVAKTAVAP), 92 to 112 (LWRGNSATMVRVIPYAAIQFC), 138 to 158 (LLAGALAGTTATLLTYPLDLV), 192 to 209 (GFTPTVLGVIPYAGISFF), 233 to 253 (LLFGACAGLFGQSSSYPLDVV), and 296 to 316 (VKGPVAVGISFTTFDLTQILL).

Belongs to the mitochondrial carrier (TC 2.A.29) family.

The protein resides in the mitochondrion inner membrane. It carries out the reaction ADP(out) + CoA(in) = ADP(in) + CoA(out). The catalysed reaction is 3'-dephospho-CoA(in) + ADP(out) = 3'-dephospho-CoA(out) + ADP(in). It catalyses the reaction adenosine 3',5'-bisphosphate(in) + ADP(out) = adenosine 3',5'-bisphosphate(out) + ADP(in). The enzyme catalyses AMP(in) + ADP(out) = AMP(out) + ADP(in). It carries out the reaction dADP(in) + ADP(out) = dADP(out) + ADP(in). The catalysed reaction is ADP(in) + ATP(out) = ADP(out) + ATP(in). In terms of biological role, mitochondrial carrier mediating the transport of coenzyme A (CoA) in mitochondria in exchange for intramitochondrial (deoxy)adenine nucleotides and adenosine 3',5'-diphosphate. This chain is Mitochondrial coenzyme A transporter SLC25A42 (slc25a42), found in Xenopus laevis (African clawed frog).